A 116-amino-acid chain; its full sequence is Large ribosomal subunit protein uL18 (116 aa).

It belongs to the universal ribosomal protein uL18 family. As to quaternary structure, part of the 50S ribosomal subunit; part of the 5S rRNA/L5/L18/L25 subcomplex. Contacts the 5S and 23S rRNAs.

Its function is as follows. This is one of the proteins that bind and probably mediate the attachment of the 5S RNA into the large ribosomal subunit, where it forms part of the central protuberance. The sequence is that of Large ribosomal subunit protein uL18 from Shewanella denitrificans (strain OS217 / ATCC BAA-1090 / DSM 15013).